A 732-amino-acid chain; its full sequence is Catalase-peroxidase (732 aa).

The disordered stretch occupies residues 1-26; that stretch reads MADNKKSPETGGITMQIPGKGRTNRD. The segment at residues 96 to 219 is a cross-link (tryptophyl-tyrosyl-methioninium (Trp-Tyr) (with M-245)); sequence WHSAGTYRTF…LAAVQMGLIY (124 aa). H97 functions as the Proton acceptor in the catalytic mechanism. The tryptophyl-tyrosyl-methioninium (Tyr-Met) (with W-96) cross-link spans 219–245; sequence YVNPEGPDGNPDPVAAARDIREVFARM. Residue H260 coordinates heme b. The tract at residues 344–365 is disordered; the sequence is KPKGEAGAGTVPDPHDPKKRHA.

This sequence belongs to the peroxidase family. Peroxidase/catalase subfamily. In terms of assembly, homodimer or homotetramer. The cofactor is heme b. In terms of processing, formation of the three residue Trp-Tyr-Met cross-link is important for the catalase, but not the peroxidase activity of the enzyme.

The enzyme catalyses H2O2 + AH2 = A + 2 H2O. It catalyses the reaction 2 H2O2 = O2 + 2 H2O. Functionally, bifunctional enzyme with both catalase and broad-spectrum peroxidase activity. This chain is Catalase-peroxidase, found in Methanospirillum hungatei JF-1 (strain ATCC 27890 / DSM 864 / NBRC 100397 / JF-1).